Consider the following 250-residue polypeptide: Bacteriorhodopsin-I (250 aa).

7 helical membrane-spanning segments follow: residues 7–27 (EGIW…YFIA), 42–62 (IATI…ALGF), 81–101 (YTDW…LAGA), 114–134 (VLMI…VLSA), 139–159 (LVWW…LFSS), 185–205 (VWLV…LVGI), and 207–227 (IETA…GIIL). Lysine 220 bears the N6-(retinylidene)lysine mark.

It belongs to the archaeal/bacterial/fungal opsin family. In terms of processing, the covalent binding of retinal to the apoprotein, bacterioopsin, generates bacteriorhodopsin.

The protein resides in the membrane. In terms of biological role, light-driven proton pump. The chain is Bacteriorhodopsin-I (bop) from Haloarcula marismortui (strain ATCC 43049 / DSM 3752 / JCM 8966 / VKM B-1809) (Halobacterium marismortui).